A 150-amino-acid chain; its full sequence is MLKTVNILNKRAKFEYEIIDRYTAGMVLTGTEIKSIRLGKANIAESFCEFQGDELFVINSHIEEYLFGHQYNHKPKSERKLLLNKRELKGLLKDVQNKGLTIIPLRLFTNEKGMAKLDIALCKGKKTFDKRETIKDRDNKRDLDRIKKEF.

This sequence belongs to the SmpB family.

It localises to the cytoplasm. Its function is as follows. Required for rescue of stalled ribosomes mediated by trans-translation. Binds to transfer-messenger RNA (tmRNA), required for stable association of tmRNA with ribosomes. tmRNA and SmpB together mimic tRNA shape, replacing the anticodon stem-loop with SmpB. tmRNA is encoded by the ssrA gene; the 2 termini fold to resemble tRNA(Ala) and it encodes a 'tag peptide', a short internal open reading frame. During trans-translation Ala-aminoacylated tmRNA acts like a tRNA, entering the A-site of stalled ribosomes, displacing the stalled mRNA. The ribosome then switches to translate the ORF on the tmRNA; the nascent peptide is terminated with the 'tag peptide' encoded by the tmRNA and targeted for degradation. The ribosome is freed to recommence translation, which seems to be the essential function of trans-translation. This Flavobacterium psychrophilum (strain ATCC 49511 / DSM 21280 / CIP 103535 / JIP02/86) protein is SsrA-binding protein.